Reading from the N-terminus, the 215-residue chain is MADSSPAPSLRAGGPREPRPSAPSPPPPHSRLGSEAEEAELSLSLARTKTRSYGSTASVRAPLGAGVIERHVEHRVRAGDTLQGIALKYGVSMEQIKRANKLFTNDCIFLKKTLNIPVISEKPLLFNGLNSVDSPENETVDSFSHEEELVAAGEDVSPLSPQELDVQPMQPEEVSARDFLQRLDLQIKLSTQAAKKLKGESRDEEGLYTASLYHS.

Residues 1 to 40 (MADSSPAPSLRAGGPREPRPSAPSPPPPHSRLGSEAEEAE) are disordered. Ala-2 carries the post-translational modification N-acetylalanine. Ser-5, Ser-24, Ser-34, and Ser-58 each carry phosphoserine. Pro residues predominate over residues 20 to 29 (PSAPSPPPPH). One can recognise a LysM domain in the interval 72 to 116 (VEHRVRAGDTLQGIALKYGVSMEQIKRANKLFTNDCIFLKKTLNI). The segment at 194–215 (AKKLKGESRDEEGLYTASLYHS) is disordered.

This Bos taurus (Bovine) protein is LysM and putative peptidoglycan-binding domain-containing protein 2 (LYSMD2).